Here is a 190-residue protein sequence, read N- to C-terminus: dCTP deaminase (190 aa).

DCTP contacts are provided by residues 111 to 116 (KSTYAR), 135 to 137 (TLE), Q156, Y172, and Q182. Residue E137 is the Proton donor/acceptor of the active site.

The protein belongs to the dCTP deaminase family. In terms of assembly, homotrimer.

The catalysed reaction is dCTP + H2O + H(+) = dUTP + NH4(+). Its pathway is pyrimidine metabolism; dUMP biosynthesis; dUMP from dCTP (dUTP route): step 1/2. Catalyzes the deamination of dCTP to dUTP. The polypeptide is dCTP deaminase (Stenotrophomonas maltophilia (strain K279a)).